The following is a 191-amino-acid chain: UPF0312 protein PSPA7_0523 (191 aa).

Residues 1–23 (MLKKTLAALALGSALFTAGQAMA) form the signal peptide.

This sequence belongs to the UPF0312 family. Type 1 subfamily.

The protein resides in the periplasm. The protein is UPF0312 protein PSPA7_0523 of Pseudomonas paraeruginosa (strain DSM 24068 / PA7) (Pseudomonas aeruginosa (strain PA7)).